Consider the following 488-residue polypeptide: Ribulose bisphosphate carboxylase large chain (488 aa).

Substrate-binding residues include N127 and T177. K179 functions as the Proton acceptor in the catalytic mechanism. Substrate is bound at residue K181. Residues K205, D207, and E208 each coordinate Mg(2+). N6-carboxylysine is present on K205. H297 serves as the catalytic Proton acceptor. Residues R298, H330, and S382 each coordinate substrate.

The protein belongs to the RuBisCO large chain family. Type I subfamily. As to quaternary structure, heterohexadecamer of 8 large chains and 8 small chains. It depends on Mg(2+) as a cofactor.

It is found in the plastid. It localises to the chloroplast. It carries out the reaction 2 (2R)-3-phosphoglycerate + 2 H(+) = D-ribulose 1,5-bisphosphate + CO2 + H2O. The catalysed reaction is D-ribulose 1,5-bisphosphate + O2 = 2-phosphoglycolate + (2R)-3-phosphoglycerate + 2 H(+). In terms of biological role, ruBisCO catalyzes two reactions: the carboxylation of D-ribulose 1,5-bisphosphate, the primary event in carbon dioxide fixation, as well as the oxidative fragmentation of the pentose substrate in the photorespiration process. Both reactions occur simultaneously and in competition at the same active site. The chain is Ribulose bisphosphate carboxylase large chain from Porphyra purpurea (Red seaweed).